Consider the following 399-residue polypeptide: Carbamoyl phosphate synthase arginine-specific small chain (399 aa).

In terms of domain architecture, Glutamine amidotransferase type-1 spans aspartate 187–leucine 379. Residue cysteine 267 is the Nucleophile of the active site. Residues histidine 352 and glutamate 354 contribute to the active site.

The protein belongs to the CarA family. Heterodimer composed of 2 chains; the small (or glutamine) chain promotes the hydrolysis of glutamine to ammonia, which is used by the large (or ammonia) chain to synthesize carbamoyl phosphate.

The protein resides in the cytoplasm. The catalysed reaction is hydrogencarbonate + L-glutamine + 2 ATP + H2O = carbamoyl phosphate + L-glutamate + 2 ADP + phosphate + 2 H(+). The enzyme catalyses L-glutamine + H2O = L-glutamate + NH4(+). The protein operates within amino-acid biosynthesis; L-arginine biosynthesis; carbamoyl phosphate from bicarbonate: step 1/1. Its function is as follows. Small subunit of the arginine-specific carbamoyl phosphate synthase (CPSase). CPSase catalyzes the formation of carbamoyl phosphate from the ammonia moiety of glutamine, carbonate, and phosphate donated by ATP, constituting the first step of 2 biosynthetic pathways, one leading to arginine and/or urea and the other to pyrimidine nucleotides. The small subunit (glutamine amidotransferase) binds and cleaves glutamine to supply the large subunit with the substrate ammonia. The polypeptide is Carbamoyl phosphate synthase arginine-specific small chain (CPA1) (Eremothecium gossypii (strain ATCC 10895 / CBS 109.51 / FGSC 9923 / NRRL Y-1056) (Yeast)).